We begin with the raw amino-acid sequence, 496 residues long: Probable CtpA-like serine protease (496 aa).

Basic and acidic residues predominate over residues 1 to 16 (MDDKQHTSSSDDERAE). Positions 1-27 (MDDKQHTSSSDDERAEIATSNQDQETN) are disordered. Polar residues predominate over residues 18–27 (ATSNQDQETN). Residues 39–59 (FISILIGTTLITAVITVVAYI) traverse the membrane as a helical segment. One can recognise a PDZ domain in the interval 124–206 (TKSFNEGVSG…TEVTLTVQRG (83 aa)). Catalysis depends on charge relay system residues Ser-329, Asp-340, and Lys-354.

It belongs to the peptidase S41A family.

It localises to the cell membrane. The chain is Probable CtpA-like serine protease from Staphylococcus aureus (strain Mu50 / ATCC 700699).